A 294-amino-acid polypeptide reads, in one-letter code: Indole-3-glycerol phosphate synthase (294 aa).

The protein belongs to the TrpC family.

The enzyme catalyses 1-(2-carboxyphenylamino)-1-deoxy-D-ribulose 5-phosphate + H(+) = (1S,2R)-1-C-(indol-3-yl)glycerol 3-phosphate + CO2 + H2O. It functions in the pathway amino-acid biosynthesis; L-tryptophan biosynthesis; L-tryptophan from chorismate: step 4/5. In Synechococcus sp. (strain CC9902), this protein is Indole-3-glycerol phosphate synthase.